Reading from the N-terminus, the 322-residue chain is 3-alpha-hydroxysteroid dehydrogenase (322 aa).

Blocked amino end (Met) is present on Met1. Residues 20–24 (GFGTT) and Asp50 contribute to the NADP(+) site. The Proton donor role is filled by Tyr55. His117 contacts substrate. Residues 166–167 (SN), Gln190, and 216–221 (YCTLGS) contribute to the NADP(+) site. Trp227 serves as a coordination point for substrate. 270–280 (RSFNAKRIKEL) contacts NADP(+).

This sequence belongs to the aldo/keto reductase family. As to quaternary structure, monomer. In terms of tissue distribution, in brain, highest levels found in olfactory bulb. Moderate levels present in cerebellum, cerebral cortex, hypothalamus and pituitary. Low levels present in amygdala, brain stem, caudate putamen, cingulate cortex, hippocampus, midbrain, and thalamus.

The protein resides in the cytoplasm. The catalysed reaction is a 3alpha-hydroxysteroid + NADP(+) = a 3-oxosteroid + NADPH + H(+). It carries out the reaction a 3alpha-hydroxysteroid + NAD(+) = a 3-oxosteroid + NADH + H(+). Potently inhibited by the nonsteroidal anti-inflammatory drugs (NSAID). Its function is as follows. Besides being a 3-alpha-hydroxysteroid dehydrogenase, the enzyme can accomplish diverse functions: as quinone reductase, as an aromatic alcohol dehydrogenase, as dihydrodiol dehydrogenase, and as 9-, 11-, and 15-hydroxyprostaglandin dehydrogenase. The chain is 3-alpha-hydroxysteroid dehydrogenase (Akr1c9) from Rattus norvegicus (Rat).